We begin with the raw amino-acid sequence, 177 residues long: Phycoerythrin beta subunit (177 aa).

4 residues coordinate (2R,3E)-phycoerythrobilin: Tyr18, Lys28, Asn35, and Asp39. The 15,16-dihydrobiliverdin site is built by Cys50, Asp54, and Cys61. Positions 82, 84, and 85 each coordinate (2R,3E)-phycoerythrobilin. Arg129 is a 15,16-dihydrobiliverdin binding site. Asn144 contributes to the (2R,3E)-phycoerythrobilin binding site. Residues Gln148 and Lys149 each contribute to the 15,16-dihydrobiliverdin site. (2R,3E)-phycoerythrobilin is bound by residues Pro154, Gly156, and Cys158.

Belongs to the phycobiliprotein family. Heterotetramer of 2 different alpha chains and 2 identical beta chains which form 2 alpha-beta heterodimers within the heterotetramer. The two alpha-beta heterodimers are rotated to an open configuration in contrast to the closed configuration found in other cryptophyte species due to the insertion of a single amino acid, 'Asp-65', in a conserved region of the alpha chain. In the open form, the central chromophores are not in physical contact but are separated by a water-filled channel. Post-translationally, contains three phycoerythrobilin chromophores and one 15,16-dihydrobiliverdin chromophore with binding of the phycoerythrobilin chromophores mediated by both the alpha and beta subunits.

Its subcellular location is the plastid. The protein localises to the chloroplast thylakoid membrane. Functionally, light-harvesting photosynthetic bile pigment-protein from the phycobiliprotein complex. The sequence is that of Phycoerythrin beta subunit from Hemiselmis andersenii (Cryptophyte alga).